A 270-amino-acid chain; its full sequence is WGALGHATVAYVAQHYVSPEAASWAQGILGSSSSSYLASIASWADEYRLTSAGKWSASLHFIDAEDNPPTNCNVDYERDCGSSGCSISAIANYTQRVSDSSLSSENHAEALRFLVHFIGDMTQPLHDEAYAVGGNKINVTFDGYHDNLHSDWDTYMPQKLIGGHALSDAESWAKTLVQNIESGNYTAQAIGWIKGDNISEPITTATRWASDANALVCTVVMPHGAAALQTGDLYPTYYDSVIDTIELQIAKGGYRLANWINEIHGSEIAK.

Residues tryptophan 1, histidine 6, histidine 15, aspartate 45, and histidine 60 each contribute to the a divalent metal cation site. Residue 1–6 (WGALGH) participates in substrate binding. Substrate-binding positions include 45-51 (DEYRLTS), 60-63 (HFID), and 73-78 (NVDYER). 2 cysteine pairs are disulfide-bonded: cysteine 72–cysteine 217 and cysteine 80–cysteine 85. Asparagine 92 carries N-linked (GlcNAc...) asparagine glycosylation. Positions 116, 120, and 126 each coordinate a divalent metal cation. Residues 116 to 164 (HFIGDMTQPLHDEAYAVGGNKINVTFDGYHDNLHSDWDTYMPQKLIGGH) are substrate binding. N-linked (GlcNAc...) asparagine glycosylation is present at asparagine 138. A divalent metal cation contacts are provided by histidine 149 and aspartate 153. 2 N-linked (GlcNAc...) asparagine glycosylation sites follow: asparagine 184 and asparagine 197.

The protein belongs to the nuclease type I family. It depends on Zn(2+) as a cofactor.

Its subcellular location is the secreted. It catalyses the reaction Endonucleolytic cleavage to 5'-phosphomononucleotide and 5'-phosphooligonucleotide end-products.. In terms of biological role, hydrolyzes only single-stranded DNA and RNA without apparent specificity for bases. In Penicillium citrinum, this protein is Nuclease P1.